Consider the following 679-residue polypeptide: Genome polyprotein (679 aa).

A propeptide spans 1 to 14 (SAGMIIMLIPTVMA) (ER anchor for the capsid protein C, removed in mature form by serine protease NS3). The chain crosses the membrane as a helical span at residues 2 to 22 (AGMIIMLIPTVMAFHLTTRNG). Residues 23-138 (EPHMIVSRQE…GAWKHAQRIE (116 aa)) are Extracellular-facing. N83 carries N-linked (GlcNAc...) asparagine; by host glycosylation. Residues 139 to 159 (IWILRHPGFTIMAAILAYTIG) form a helical membrane-spanning segment. The Cytoplasmic portion of the chain corresponds to 160-165 (TTHFQR). Residues 166–180 (ALIFILLTAVAPSMT) form a helical membrane-spanning segment. Over 181–625 (MRCIGISNRD…LHQVFGAIYG (445 aa)) the chain is Extracellular. 4 cysteine pairs are disulfide-bonded: C183/C210, C240/C301, C254/C285, and C272/C296. N-linked (GlcNAc...) asparagine; by host glycosylation is present at N247. Residues 278-291 (DRGWGNGCGLFGKG) form a fusion peptide region. N-linked (GlcNAc...) asparagine; by host glycosylation occurs at N333. 2 disulfides stabilise this stretch: C365–C465 and C482–C513. The chain crosses the membrane as a helical span at residues 626-646 (AAFSGVSWTMKILIGVIITWI). The Cytoplasmic segment spans residues 647-652 (GMNSRS). Residues 653–673 (TSLSVSLVLVGIVTLYLGVMV) form a helical membrane-spanning segment. Topologically, residues 674 to 679 (QADSGC) are extracellular.

In terms of assembly, forms heterodimers with envelope protein E in the endoplasmic reticulum and Golgi. As to quaternary structure, homodimer; in the endoplasmic reticulum and Golgi. Interacts with protein prM. Interacts with non-structural protein 1. Post-translationally, cleaved in post-Golgi vesicles by a host furin, releasing the mature small envelope protein M, and peptide pr. This cleavage is incomplete as up to 30% of viral particles still carry uncleaved prM. N-glycosylated. In terms of processing, N-glycosylated. The excreted form is glycosylated and this is required for efficient secretion of the protein from infected cells. Post-translationally, specific enzymatic cleavages in vivo yield mature proteins. Cleavages in the lumen of endoplasmic reticulum are performed by host signal peptidase, wereas cleavages in the cytoplasmic side are performed by serine protease NS3. Signal cleavage at the 2K-4B site requires a prior NS3 protease-mediated cleavage at the 4A-2K site.

Its subcellular location is the secreted. The protein localises to the virion membrane. It localises to the host endoplasmic reticulum membrane. In terms of biological role, prevents premature fusion activity of envelope proteins in trans-Golgi by binding to envelope protein E at pH6.0. After virion release in extracellular space, gets dissociated from E dimers. Its function is as follows. Acts as a chaperone for envelope protein E during intracellular virion assembly by masking and inactivating envelope protein E fusion peptide. prM is the only viral peptide matured by host furin in the trans-Golgi network probably to avoid catastrophic activation of the viral fusion activity in acidic Golgi compartment prior to virion release. prM-E cleavage is inefficient, and many virions are only partially matured. These uncleaved prM would play a role in immune evasion. May play a role in virus budding. Exerts cytotoxic effects by activating a mitochondrial apoptotic pathway through M ectodomain. May display a viroporin activity. Functionally, binds to host cell surface receptor and mediates fusion between viral and cellular membranes. Envelope protein is synthesized in the endoplasmic reticulum in the form of heterodimer with protein prM. They play a role in virion budding in the ER, and the newly formed immature particle is covered with 60 spikes composed of heterodimer between precursor prM and envelope protein E. The virion is transported to the Golgi apparatus where the low pH causes dissociation of PrM-E heterodimers and formation of E homodimers. prM-E cleavage is inefficient, and many virions are only partially matured. These uncleaved prM would play a role in immune evasion. In terms of biological role, involved in immune evasion, pathogenesis and viral replication. Once cleaved off the polyprotein, is targeted to three destinations: the viral replication cycle, the plasma membrane and the extracellular compartment. Essential for viral replication. Required for formation of the replication complex and recruitment of other non-structural proteins to the ER-derived membrane structures. Excreted as a hexameric lipoparticle that plays a role against host immune response. Antagonizing the complement function. Binds to the host macrophages and dendritic cells. Inhibits signal transduction originating from Toll-like receptor 3 (TLR3). Its function is as follows. Disrupts the host endothelial glycocalyx layer of host pulmonary microvascular endothelial cells, inducing degradation of sialic acid and shedding of heparan sulfate proteoglycans. NS1 induces expression of sialidases, heparanase, and activates cathepsin L, which activates heparanase via enzymatic cleavage. These effects are probably linked to the endothelial hyperpermeability observed in severe dengue disease. This Dengue virus type 2 (strain Thailand/PUO-218/1980) (DENV-2) protein is Genome polyprotein.